The chain runs to 569 residues: Proline--tRNA ligase (569 aa).

The protein belongs to the class-II aminoacyl-tRNA synthetase family. ProS type 1 subfamily. Homodimer.

Its subcellular location is the cytoplasm. It catalyses the reaction tRNA(Pro) + L-proline + ATP = L-prolyl-tRNA(Pro) + AMP + diphosphate. In terms of biological role, catalyzes the attachment of proline to tRNA(Pro) in a two-step reaction: proline is first activated by ATP to form Pro-AMP and then transferred to the acceptor end of tRNA(Pro). As ProRS can inadvertently accommodate and process non-cognate amino acids such as alanine and cysteine, to avoid such errors it has two additional distinct editing activities against alanine. One activity is designated as 'pretransfer' editing and involves the tRNA(Pro)-independent hydrolysis of activated Ala-AMP. The other activity is designated 'posttransfer' editing and involves deacylation of mischarged Ala-tRNA(Pro). The misacylated Cys-tRNA(Pro) is not edited by ProRS. The sequence is that of Proline--tRNA ligase from Nitratiruptor sp. (strain SB155-2).